Reading from the N-terminus, the 576-residue chain is Proline--tRNA ligase (576 aa).

This sequence belongs to the class-II aminoacyl-tRNA synthetase family. ProS type 1 subfamily. Homodimer.

The protein localises to the cytoplasm. The enzyme catalyses tRNA(Pro) + L-proline + ATP = L-prolyl-tRNA(Pro) + AMP + diphosphate. Functionally, catalyzes the attachment of proline to tRNA(Pro) in a two-step reaction: proline is first activated by ATP to form Pro-AMP and then transferred to the acceptor end of tRNA(Pro). As ProRS can inadvertently accommodate and process non-cognate amino acids such as alanine and cysteine, to avoid such errors it has two additional distinct editing activities against alanine. One activity is designated as 'pretransfer' editing and involves the tRNA(Pro)-independent hydrolysis of activated Ala-AMP. The other activity is designated 'posttransfer' editing and involves deacylation of mischarged Ala-tRNA(Pro). The misacylated Cys-tRNA(Pro) is not edited by ProRS. This is Proline--tRNA ligase from Thiobacillus denitrificans (strain ATCC 25259 / T1).